Consider the following 58-residue polypeptide: Small integral membrane protein 11 (58 aa).

Residues 10–32 (PLLLYILAAKTLILCLTFAGVKM) traverse the membrane as a helical segment. Positions 29–58 (GVKMYQRKRLEAKQQKLEAERKKQSEKKDN) form a coiled coil.

In terms of tissue distribution, expressed in heart, spleen, liver, stomach, muscle, lung, testis, skin, PBL and bone marrow.

Its subcellular location is the membrane. The chain is Small integral membrane protein 11 from Homo sapiens (Human).